The sequence spans 403 residues: Phosphopentomutase (403 aa).

Mn(2+)-binding residues include Asp13, Asp298, His303, Asp339, His340, and His351.

The protein belongs to the phosphopentomutase family. It depends on Mn(2+) as a cofactor.

The protein resides in the cytoplasm. The enzyme catalyses 2-deoxy-alpha-D-ribose 1-phosphate = 2-deoxy-D-ribose 5-phosphate. The catalysed reaction is alpha-D-ribose 1-phosphate = D-ribose 5-phosphate. The protein operates within carbohydrate degradation; 2-deoxy-D-ribose 1-phosphate degradation; D-glyceraldehyde 3-phosphate and acetaldehyde from 2-deoxy-alpha-D-ribose 1-phosphate: step 1/2. In terms of biological role, isomerase that catalyzes the conversion of deoxy-ribose 1-phosphate (dRib-1-P) and ribose 1-phosphate (Rib-1-P) to deoxy-ribose 5-phosphate (dRib-5-P) and ribose 5-phosphate (Rib-5-P), respectively. This chain is Phosphopentomutase, found in Streptococcus pneumoniae serotype 2 (strain D39 / NCTC 7466).